The chain runs to 662 residues: Bifunctional polymyxin resistance protein ArnA (662 aa).

A formyltransferase ArnAFT region spans residues 1 to 307 (MTSKAVVFAY…ELGLVEGARL (307 aa)). H106 acts as the Proton donor; for formyltransferase activity in catalysis. (6R)-10-formyltetrahydrofolate is bound by residues R116 and 138–142 (VERAD). The dehydrogenase ArnADH stretch occupies residues 316-662 (RRTRVLILGV…EALREREAQA (347 aa)). NAD(+) contacts are provided by residues D349 and 370-371 (DI). UDP-alpha-D-glucuronate contacts are provided by residues A395, Y400, and 434 to 435 (TS). E436 (proton acceptor; for decarboxylase activity) is an active-site residue. UDP-alpha-D-glucuronate-binding positions include R462, N493, 527–536 (RLVDGGAQKR), and Y614. Residue R620 is the Proton donor; for decarboxylase activity of the active site.

The protein in the N-terminal section; belongs to the Fmt family. UDP-L-Ara4N formyltransferase subfamily. It in the C-terminal section; belongs to the NAD(P)-dependent epimerase/dehydratase family. UDP-glucuronic acid decarboxylase subfamily. Homohexamer, formed by a dimer of trimers.

It carries out the reaction UDP-alpha-D-glucuronate + NAD(+) = UDP-beta-L-threo-pentopyranos-4-ulose + CO2 + NADH. The catalysed reaction is UDP-4-amino-4-deoxy-beta-L-arabinose + (6R)-10-formyltetrahydrofolate = UDP-4-deoxy-4-formamido-beta-L-arabinose + (6S)-5,6,7,8-tetrahydrofolate + H(+). It functions in the pathway nucleotide-sugar biosynthesis; UDP-4-deoxy-4-formamido-beta-L-arabinose biosynthesis; UDP-4-deoxy-4-formamido-beta-L-arabinose from UDP-alpha-D-glucuronate: step 1/3. The protein operates within nucleotide-sugar biosynthesis; UDP-4-deoxy-4-formamido-beta-L-arabinose biosynthesis; UDP-4-deoxy-4-formamido-beta-L-arabinose from UDP-alpha-D-glucuronate: step 3/3. It participates in bacterial outer membrane biogenesis; lipopolysaccharide biosynthesis. In terms of biological role, bifunctional enzyme that catalyzes the oxidative decarboxylation of UDP-glucuronic acid (UDP-GlcUA) to UDP-4-keto-arabinose (UDP-Ara4O) and the addition of a formyl group to UDP-4-amino-4-deoxy-L-arabinose (UDP-L-Ara4N) to form UDP-L-4-formamido-arabinose (UDP-L-Ara4FN). The modified arabinose is attached to lipid A and is required for resistance to polymyxin and cationic antimicrobial peptides. This chain is Bifunctional polymyxin resistance protein ArnA, found in Pseudomonas paraeruginosa (strain DSM 24068 / PA7) (Pseudomonas aeruginosa (strain PA7)).